We begin with the raw amino-acid sequence, 94 residues long: MDPELLVSIYASTAVSVGIILAAAGLGSALGWGLICSKYLEGIARQPEMRPQLMGQMLFTGGLMEAFPMIVLGMSMWFIFANPFTGAALAAIGS.

2 helical membrane-spanning segments follow: residues 15 to 35 and 61 to 81; these read VSVG…WGLI and GGLM…FIFA.

The protein belongs to the ATPase C chain family. In terms of assembly, F-type ATPases have 2 components, F(1) - the catalytic core - and F(0) - the membrane proton channel. F(1) has five subunits: alpha(3), beta(3), gamma(1), delta(1), epsilon(1). F(0) has three main subunits: a(1), b(2) and c(10-14). The alpha and beta chains form an alternating ring which encloses part of the gamma chain. F(1) is attached to F(0) by a central stalk formed by the gamma and epsilon chains, while a peripheral stalk is formed by the delta and b chains.

Its subcellular location is the cell inner membrane. F(1)F(0) ATP synthase produces ATP from ADP in the presence of a proton or sodium gradient. F-type ATPases consist of two structural domains, F(1) containing the extramembraneous catalytic core and F(0) containing the membrane proton channel, linked together by a central stalk and a peripheral stalk. During catalysis, ATP synthesis in the catalytic domain of F(1) is coupled via a rotary mechanism of the central stalk subunits to proton translocation. Its function is as follows. Key component of the F(0) channel; it plays a direct role in translocation across the membrane. A homomeric c-ring of between 10-14 subunits forms the central stalk rotor element with the F(1) delta and epsilon subunits. This Nitrosococcus oceani (strain ATCC 19707 / BCRC 17464 / JCM 30415 / NCIMB 11848 / C-107) protein is ATP synthase subunit c.